Consider the following 357-residue polypeptide: Ribosomal RNA large subunit methyltransferase F (357 aa).

Residues 1-15 (MPKPPRSTQILSCNA) show a composition bias toward polar residues. The disordered stretch occupies residues 1 to 33 (MPKPPRSTQILSCNAPNGKPKTQHPSARAKVKR).

The protein belongs to the methyltransferase superfamily. METTL16/RlmF family.

The protein localises to the cytoplasm. It carries out the reaction adenosine(1618) in 23S rRNA + S-adenosyl-L-methionine = N(6)-methyladenosine(1618) in 23S rRNA + S-adenosyl-L-homocysteine + H(+). Specifically methylates the adenine in position 1618 of 23S rRNA. The protein is Ribosomal RNA large subunit methyltransferase F of Shewanella putrefaciens (strain CN-32 / ATCC BAA-453).